A 102-amino-acid chain; its full sequence is NADH-quinone oxidoreductase subunit K (102 aa).

Helical transmembrane passes span 6–26 (MHHG…GILV), 30–50 (LIFI…AFVV), and 64–84 (FIFI…LLLL).

The protein belongs to the complex I subunit 4L family. NDH-1 is composed of 14 different subunits. Subunits NuoA, H, J, K, L, M, N constitute the membrane sector of the complex.

It is found in the cell inner membrane. The catalysed reaction is a quinone + NADH + 5 H(+)(in) = a quinol + NAD(+) + 4 H(+)(out). Its function is as follows. NDH-1 shuttles electrons from NADH, via FMN and iron-sulfur (Fe-S) centers, to quinones in the respiratory chain. The immediate electron acceptor for the enzyme in this species is believed to be ubiquinone. Couples the redox reaction to proton translocation (for every two electrons transferred, four hydrogen ions are translocated across the cytoplasmic membrane), and thus conserves the redox energy in a proton gradient. In Nitrosospira multiformis (strain ATCC 25196 / NCIMB 11849 / C 71), this protein is NADH-quinone oxidoreductase subunit K.